An 865-amino-acid chain; its full sequence is Serine/threonine-protein kinase greatwall (865 aa).

Met-1 carries the post-translational modification N-acetylmethionine. The region spanning 34–821 (FTIVKPISRG…MRELKQHPLF (788 aa)) is the Protein kinase domain. Residues 40–48 (ISRGAFGKV) and Lys-61 each bind ATP. Asp-155 functions as the Proton acceptor in the catalytic mechanism. A phosphothreonine mark is found at Thr-206 and Thr-221. Residues Ser-362 and Ser-442 each carry the phosphoserine modification. At Thr-508 the chain carries Phosphothreonine. A phosphoserine mark is found at Ser-545, Ser-619, Ser-644, and Ser-655. Position 708 is a phosphothreonine (Thr-708). Ser-711 carries the post-translational modification Phosphoserine. The residue at position 727 (Thr-727) is a Phosphothreonine; by CDK1. Residues 822–865 (SEVDWENLQHQTMPFVPQPDDETDTSYFEARNNAQHLTISGFSL) enclose the AGC-kinase C-terminal domain. Ser-861 and Ser-864 each carry phosphoserine.

Belongs to the protein kinase superfamily. AGC Ser/Thr protein kinase family. Phosphorylation at Thr-727 by CDK1 during M phase activates its kinase activity. Maximum phosphorylation occurs in prometaphase.

It is found in the cytoplasm. The protein localises to the cytoskeleton. Its subcellular location is the microtubule organizing center. The protein resides in the centrosome. It localises to the nucleus. It catalyses the reaction L-seryl-[protein] + ATP = O-phospho-L-seryl-[protein] + ADP + H(+). The enzyme catalyses L-threonyl-[protein] + ATP = O-phospho-L-threonyl-[protein] + ADP + H(+). In terms of biological role, serine/threonine kinase that plays a key role in M phase by acting as a regulator of mitosis entry and maintenance. Acts by promoting the inactivation of protein phosphatase 2A (PP2A) during M phase: does not directly inhibit PP2A but acts by mediating phosphorylation and subsequent activation of ARPP19 and ENSA at 'Ser-62' and 'Ser-67', respectively. ARPP19 and ENSA are phosphatase inhibitors that specifically inhibit the PPP2R2D (PR55-delta) subunit of PP2A. Inactivation of PP2A during M phase is essential to keep cyclin-B1-CDK1 activity high. Following DNA damage, it is also involved in checkpoint recovery by being inhibited. In Mus musculus (Mouse), this protein is Serine/threonine-protein kinase greatwall (Mastl).